We begin with the raw amino-acid sequence, 402 residues long: MTLNMKVESMQKFHTFEIPTVIKHGIGAIKHTGEEVAALGVSKALLVTDPGIYKAGVADPVIESLKEAGIEVVLFNKVEPNPPVRLVNEGSELYKKENCNGLVAVGGGSSMDTAKAIGVEATHEGSVLDYEAADGKKPLENRIPPLTTIPTTAGTGSEVTQWAVITDEEREFKFNTGGPLIAAHLTIIDPELHVSMPPHVTAMTGIDALAHAIECYTMKFAQPITDAVALMAIEYAAHYIKRAFADGEDLEARYGMAQAAMLAGLSYGSESAGAAHAMSQTLGGIIPVAHGQCVAAMMGPVMEYNWKGYPEKFARIAKAFGIDTSKMTTEEAAKASVNWMYDLVEDLEVPTLEEQGVSPDMIERLSKEAMKDPQTFGNPRDLNEKAYNWIYKRCFNLTPKTV.

This sequence belongs to the iron-containing alcohol dehydrogenase family.

The enzyme catalyses choline + NAD(+) = betaine aldehyde + NADH + H(+). It participates in amine and polyamine biosynthesis; betaine biosynthesis via choline pathway; betaine aldehyde from choline (dehydrogenase route): step 1/1. Its function is as follows. Involved in the biosynthesis of the osmoprotectant glycine betaine from choline. The polypeptide is Choline dehydrogenase (Bacillus subtilis (strain 168)).